Here is a 263-residue protein sequence, read N- to C-terminus: Glutamate racemase (263 aa).

Substrate is bound by residues 13 to 14 and 45 to 46; these read DS and YG. C77 functions as the Proton donor/acceptor in the catalytic mechanism. 78–79 is a binding site for substrate; the sequence is NT. C185 acts as the Proton donor/acceptor in catalysis. Position 186-187 (186-187) interacts with substrate; it reads TH.

It belongs to the aspartate/glutamate racemases family.

It catalyses the reaction L-glutamate = D-glutamate. It participates in cell wall biogenesis; peptidoglycan biosynthesis. In terms of biological role, provides the (R)-glutamate required for cell wall biosynthesis. This Vibrio vulnificus (strain CMCP6) protein is Glutamate racemase.